A 289-amino-acid chain; its full sequence is Oxaloacetate decarboxylase 1 (289 aa).

Position 50 (Ser50) interacts with substrate. Asp88 is a Mg(2+) binding site. Substrate is bound by residues Arg159 and His235.

The protein belongs to the isocitrate lyase/PEP mutase superfamily. Oxaloacetate decarboxylase family. In terms of assembly, homotetramer; dimer of dimers. The cofactor is Mg(2+).

The catalysed reaction is oxaloacetate + H(+) = pyruvate + CO2. Catalyzes the decarboxylation of oxaloacetate into pyruvate. Seems to play a role in maintaining cellular concentrations of bicarbonate and pyruvate. In Pseudomonas fluorescens (strain Pf0-1), this protein is Oxaloacetate decarboxylase 1.